The primary structure comprises 258 residues: Phosphoribosylaminoimidazole-succinocarboxamide synthase (258 aa).

This sequence belongs to the SAICAR synthetase family.

The catalysed reaction is 5-amino-1-(5-phospho-D-ribosyl)imidazole-4-carboxylate + L-aspartate + ATP = (2S)-2-[5-amino-1-(5-phospho-beta-D-ribosyl)imidazole-4-carboxamido]succinate + ADP + phosphate + 2 H(+). It functions in the pathway purine metabolism; IMP biosynthesis via de novo pathway; 5-amino-1-(5-phospho-D-ribosyl)imidazole-4-carboxamide from 5-amino-1-(5-phospho-D-ribosyl)imidazole-4-carboxylate: step 1/2. The polypeptide is Phosphoribosylaminoimidazole-succinocarboxamide synthase (Rhizorhabdus wittichii (strain DSM 6014 / CCUG 31198 / JCM 15750 / NBRC 105917 / EY 4224 / RW1) (Sphingomonas wittichii)).